Consider the following 50-residue polypeptide: Metallothionein zym1 (50 aa).

Zn(2+) contacts are provided by C7, C15, C17, C21, C23, C26, C30, C32, C40, C42, C45, and C47.

The protein belongs to the metallothionein superfamily.

The protein localises to the cytoplasm. It localises to the nucleus. In terms of biological role, metallothionein involved in tolerance to zinc and cadmium. Binds four zinc ions. This Schizosaccharomyces pombe (strain 972 / ATCC 24843) (Fission yeast) protein is Metallothionein zym1 (zym1).